A 302-amino-acid polypeptide reads, in one-letter code: Glycine--tRNA ligase alpha subunit (302 aa).

Belongs to the class-II aminoacyl-tRNA synthetase family. In terms of assembly, tetramer of two alpha and two beta subunits.

Its subcellular location is the cytoplasm. The catalysed reaction is tRNA(Gly) + glycine + ATP = glycyl-tRNA(Gly) + AMP + diphosphate. The polypeptide is Glycine--tRNA ligase alpha subunit (Xanthomonas oryzae pv. oryzae (strain MAFF 311018)).